A 528-amino-acid polypeptide reads, in one-letter code: UDP-glucuronosyltransferase 2B10 (528 aa).

The signal sequence occupies residues 1 to 23 (MALKWTTVLLIQLSFYFSSGSCG). Residue asparagine 66 is glycosylated (N-linked (GlcNAc...) asparagine). Lysine 134 is modified (N6-succinyllysine). Asparagine 314 and asparagine 481 each carry an N-linked (GlcNAc...) asparagine glycan. Residues 492 to 512 (VIGFLLACVATVLFIITKCCL) traverse the membrane as a helical segment.

This sequence belongs to the UDP-glycosyltransferase family.

The protein localises to the microsome membrane. Its subcellular location is the endoplasmic reticulum membrane. It carries out the reaction glucuronate acceptor + UDP-alpha-D-glucuronate = acceptor beta-D-glucuronoside + UDP + H(+). Functionally, UDPGT is of major importance in the conjugation and subsequent elimination of potentially toxic xenobiotics and endogenous compounds. This Homo sapiens (Human) protein is UDP-glucuronosyltransferase 2B10 (UGT2B10).